Here is a 274-residue protein sequence, read N- to C-terminus: Diaminopimelate epimerase (274 aa).

Substrate is bound by residues N11, Q44, and N64. C73 (proton donor) is an active-site residue. Residues 74-75 (GN), N157, N190, and 208-209 (ER) contribute to the substrate site. C217 serves as the catalytic Proton acceptor. 218–219 (GS) lines the substrate pocket.

This sequence belongs to the diaminopimelate epimerase family. As to quaternary structure, homodimer.

It localises to the cytoplasm. The catalysed reaction is (2S,6S)-2,6-diaminopimelate = meso-2,6-diaminopimelate. It participates in amino-acid biosynthesis; L-lysine biosynthesis via DAP pathway; DL-2,6-diaminopimelate from LL-2,6-diaminopimelate: step 1/1. In terms of biological role, catalyzes the stereoinversion of LL-2,6-diaminopimelate (L,L-DAP) to meso-diaminopimelate (meso-DAP), a precursor of L-lysine and an essential component of the bacterial peptidoglycan. In Haemophilus influenzae (strain PittGG), this protein is Diaminopimelate epimerase.